Reading from the N-terminus, the 621-residue chain is DNA mismatch repair protein MutL (621 aa).

Belongs to the DNA mismatch repair MutL/HexB family.

Functionally, this protein is involved in the repair of mismatches in DNA. It is required for dam-dependent methyl-directed DNA mismatch repair. May act as a 'molecular matchmaker', a protein that promotes the formation of a stable complex between two or more DNA-binding proteins in an ATP-dependent manner without itself being part of a final effector complex. The protein is DNA mismatch repair protein MutL of Petrotoga mobilis (strain DSM 10674 / SJ95).